Here is a 367-residue protein sequence, read N- to C-terminus: Ferrochelatase (367 aa).

Fe cation-binding residues include His213 and Glu294.

This sequence belongs to the ferrochelatase family.

The protein localises to the cytoplasm. It catalyses the reaction heme b + 2 H(+) = protoporphyrin IX + Fe(2+). The protein operates within porphyrin-containing compound metabolism; protoheme biosynthesis; protoheme from protoporphyrin-IX: step 1/1. Catalyzes the ferrous insertion into protoporphyrin IX. This chain is Ferrochelatase, found in Dechloromonas aromatica (strain RCB).